We begin with the raw amino-acid sequence, 436 residues long: 3-oxo-tetronate kinase (436 aa).

ATP-binding positions include serine 272, 372-375, and glycine 415; that span reads GGET.

This sequence belongs to the four-carbon acid sugar kinase family.

It carries out the reaction 3-dehydro-L-erythronate + ATP = 3-dehydro-4-O-phospho-L-erythronate + ADP + H(+). The enzyme catalyses 3-dehydro-D-erythronate + ATP = 3-dehydro-4-O-phospho-D-erythronate + ADP + H(+). Catalyzes the ATP-dependent phosphorylation of 3-oxo-tetronate to 3-oxo-tetronate 4-phosphate. The protein is 3-oxo-tetronate kinase of Brucella melitensis biotype 1 (strain ATCC 23456 / CCUG 17765 / NCTC 10094 / 16M).